Consider the following 205-residue polypeptide: Ribosomal RNA small subunit methyltransferase G (205 aa).

S-adenosyl-L-methionine is bound by residues Gly66, Phe71, 119–120 (IE), and Arg135.

It belongs to the methyltransferase superfamily. RNA methyltransferase RsmG family.

Its subcellular location is the cytoplasm. It carries out the reaction guanosine(527) in 16S rRNA + S-adenosyl-L-methionine = N(7)-methylguanosine(527) in 16S rRNA + S-adenosyl-L-homocysteine. Its function is as follows. Specifically methylates the N7 position of guanine in position 527 of 16S rRNA. This Rhizobium rhizogenes (strain K84 / ATCC BAA-868) (Agrobacterium radiobacter) protein is Ribosomal RNA small subunit methyltransferase G.